Here is a 370-residue protein sequence, read N- to C-terminus: Chloromuconate cycloisomerase (370 aa).

Lys165 functions as the Proton acceptor in the catalytic mechanism. Residues Asp194, Glu220, and Asp245 each coordinate Mn(2+). The active-site Proton donor is Glu323.

This sequence belongs to the mandelate racemase/muconate lactonizing enzyme family. Mn(2+) is required as a cofactor.

It carries out the reaction 2-[(2R)-2-chloro-2,5-dihydro-5-oxofuryl]acetate = 3-chloro-cis,cis-muconate + H(+). It functions in the pathway aromatic compound metabolism; 3-chlorocatechol degradation. In Cupriavidus pinatubonensis (strain JMP 134 / LMG 1197) (Cupriavidus necator (strain JMP 134)), this protein is Chloromuconate cycloisomerase (tfdDI).